An 87-amino-acid chain; its full sequence is Large ribosomal subunit protein bL27 (87 aa).

The interval 1 to 21 (MAHKKAGGSSRNGRDSESKRL) is disordered.

Belongs to the bacterial ribosomal protein bL27 family.

In Burkholderia multivorans (strain ATCC 17616 / 249), this protein is Large ribosomal subunit protein bL27.